Reading from the N-terminus, the 102-residue chain is Type IV secretion system protein PtlA homolog (102 aa).

The N-terminal stretch at 1–31 is a signal peptide; sequence MNRLKDLGTPRPRLAFMAACILLLATLPDFA. 2 helical membrane-spanning segments follow: residues 45-65 and 77-97; these read AGIV…AIIW and VLDV…AEIA.

It belongs to the PtlA family.

Its subcellular location is the cell membrane. The chain is Type IV secretion system protein PtlA homolog (ptlA) from Bordetella bronchiseptica (strain ATCC BAA-588 / NCTC 13252 / RB50) (Alcaligenes bronchisepticus).